The primary structure comprises 374 residues: Dihydrolipoyllysine-residue acetyltransferase component of acetoin cleaving system (374 aa).

Positions 9–84 (IIPIVMPKWG…PVKALLGVLA (76 aa)) constitute a Lipoyl-binding domain. Residue lysine 50 is modified to N6-lipoyllysine. The 224-residue stretch at 137 to 360 (TVLFIHGFGG…DAGHMSQMEK (224 aa)) folds into the AB hydrolase-1 domain.

Requires (R)-lipoate as cofactor.

It carries out the reaction N(6)-[(R)-dihydrolipoyl]-L-lysyl-[protein] + acetyl-CoA = N(6)-[(R)-S(8)-acetyldihydrolipoyl]-L-lysyl-[protein] + CoA. It functions in the pathway ketone degradation; acetoin degradation. In terms of biological role, dihydrolipoamide acetyltransferase involved in acetoin catabolism. This chain is Dihydrolipoyllysine-residue acetyltransferase component of acetoin cleaving system (acoC), found in Cupriavidus necator (strain ATCC 17699 / DSM 428 / KCTC 22496 / NCIMB 10442 / H16 / Stanier 337) (Ralstonia eutropha).